The sequence spans 462 residues: Cysteine--tRNA ligase (462 aa).

Cys30 contributes to the Zn(2+) binding site. The 'HIGH' region signature appears at 32–42 (PTVYDRAHLGN). The Zn(2+) site is built by Cys221, His246, and Glu250. A 'KMSKS' region motif is present at residues 279–283 (KMSKS). ATP is bound at residue Lys282.

The protein belongs to the class-I aminoacyl-tRNA synthetase family. In terms of assembly, monomer. It depends on Zn(2+) as a cofactor.

It is found in the cytoplasm. It catalyses the reaction tRNA(Cys) + L-cysteine + ATP = L-cysteinyl-tRNA(Cys) + AMP + diphosphate. The chain is Cysteine--tRNA ligase from Paracoccus denitrificans (strain Pd 1222).